The following is a 280-amino-acid chain: Protein IMPACT homolog (280 aa).

The region spanning aspartate 9–leucine 109 is the RWD domain.

It belongs to the IMPACT family. Interacts (via N-terminus) with gcn1 (via C-terminus); this interaction reduces the gcn1-gcn20 complex formation and prevents the interaction of gcn1 with gcn2 protein kinase and gcn2 activation in amino acid-starved cells. Interacts (via C-terminus) with act1; this interaction occurs in a gcn1-independent manner. Interacts with rpl39; this interaction occurs in a gcn1-independent manner. Associates (via middle region) with ribosomes; this association occurs in a gcn1-independent manner and persists under amino acid starvation conditions.

The protein localises to the cytoplasm. Its subcellular location is the nucleus. Functionally, translational regulator that ensures constant high levels of translation under amino acid starvation. Plays a role as a negative regulator of the gcn2 kinase activity; impairs gcn1-mediated gcn2 activation, and hence gcn2-mediated eIF-2-alpha phosphorylation in amino acid-starved cells and subsequent down-regulation of protein synthesis. In normal conditions, it resides in a actin complex and has no activity. This chain is Protein IMPACT homolog (yih1), found in Schizosaccharomyces pombe (strain 972 / ATCC 24843) (Fission yeast).